Here is a 271-residue protein sequence, read N- to C-terminus: Shikimate dehydrogenase (NADP(+)) (271 aa).

Residues 14–16 (SRS) and Thr61 each bind shikimate. Lys65 serves as the catalytic Proton acceptor. Shikimate-binding residues include Asn86 and Asp102. NADP(+) contacts are provided by residues 126–130 (GAGGA), 149–154 (NRTFSR), and Met213. Residue Tyr215 coordinates shikimate. Residue Gly238 coordinates NADP(+).

This sequence belongs to the shikimate dehydrogenase family. As to quaternary structure, homodimer.

It carries out the reaction shikimate + NADP(+) = 3-dehydroshikimate + NADPH + H(+). Its pathway is metabolic intermediate biosynthesis; chorismate biosynthesis; chorismate from D-erythrose 4-phosphate and phosphoenolpyruvate: step 4/7. In terms of biological role, involved in the biosynthesis of the chorismate, which leads to the biosynthesis of aromatic amino acids. Catalyzes the reversible NADPH linked reduction of 3-dehydroshikimate (DHSA) to yield shikimate (SA). This chain is Shikimate dehydrogenase (NADP(+)), found in Histophilus somni (strain 129Pt) (Haemophilus somnus).